Here is a 156-residue protein sequence, read N- to C-terminus: Oxidized purine nucleoside triphosphate hydrolase (156 aa).

The Nudix hydrolase domain occupies 3–132; the sequence is TSRLYTLVLV…WFPLLLQKKK (130 aa). 2-oxo-dATP is bound at residue threonine 8. 8-oxo-dGTP-binding positions include threonine 8, lysine 23, asparagine 33, 35–38, and glutamate 52; that span reads FGGK. 2-oxo-dATP contacts are provided by residues asparagine 33 and 35–38; that span reads FGGK. Glycine 36, glutamate 52, glutamate 55, glutamate 56, and glutamate 100 together coordinate Mg(2+). Positions 37–58 match the Nudix box motif; sequence GKVQEGETIEDGAKRELLEESG. 8-oxo-dGTP-binding positions include glutamate 56, glutamate 100, and 117-120; that span reads WPDD. A 2-oxo-dATP-binding site is contributed by 117–120; the sequence is WPDD.

It belongs to the Nudix hydrolase family. In terms of assembly, monomer. Requires Mg(2+) as cofactor. In terms of tissue distribution, high expression levels detected in thymus, liver, spleen, kidney, testis and large intestine, with lower levels detected in brain, heart, lung and stomach (at protein level). Expressed in kidney, liver and small intestine.

The protein localises to the cytoplasm. The protein resides in the nucleus. Its subcellular location is the nucleus membrane. It is found in the cytoplasmic vesicle. It localises to the secretory vesicle. The protein localises to the acrosome. It carries out the reaction 2-oxo-dATP + H2O = 2-oxo-dAMP + diphosphate + H(+). It catalyses the reaction 2-oxo-ATP + H2O = 2-oxo-AMP + diphosphate + H(+). The enzyme catalyses 8-oxo-dGTP + H2O = 8-oxo-dGMP + diphosphate + H(+). The catalysed reaction is 8-oxo-dATP + H2O = 8-oxo-dAMP + diphosphate + H(+). It carries out the reaction O(6)-methyl-dGTP + H2O = O(6)-methyl-dGMP + diphosphate + H(+). It catalyses the reaction N(6)-methyl-dATP + H2O = N(6)-methyl-dAMP + diphosphate + H(+). The enzyme catalyses N(6)-methyl-ATP + H2O = N(6)-methyl-AMP + diphosphate + H(+). Its function is as follows. Oxidized purine nucleoside triphosphate hydrolase which is a prominent sanitizer of the oxidized nucleotide pool. Catalyzes the hydrolysis of 2-oxo-dATP (2-hydroxy-dATP) into 2-oxo-dAMP. Also has a significant hydrolase activity toward 2-oxo-ATP, 8-oxo-dGTP and 8-oxo-dATP. Through the hydrolysis of oxidized purine nucleoside triphosphates, prevents their incorporation into DNA and the subsequent transversions A:T to C:G and G:C to T:A. Also catalyzes the hydrolysis of methylated purine nucleoside triphosphate preventing their integration into DNA. Through this antimutagenic activity protects cells from oxidative stress. The polypeptide is Oxidized purine nucleoside triphosphate hydrolase (Nudt1) (Mus musculus (Mouse)).